The following is a 315-amino-acid chain: WD repeat domain-containing protein 83 (315 aa).

WD repeat units lie at residues 23–62 (CGQG…LLRT), 65–104 (GHGY…VVRK), 107–146 (GHAG…PEPV), 151–188 (EARD…LFSD), 190–228 (VGSP…LLGE), 231–272 (GHKN…LALA), and 275–313 (VGSG…AEDG).

It belongs to the WD repeat MORG1 family. Interacts with EGLN3/PHD3. Interacts with ERK signaling proteins MAP2K1/MEK1, MAP2K2/MEK2, LAMTOR3, ARAF/Raf-1, MAPK1/ERK2 and MAPK3/ERK1. Identified in the spliceosome C complex. Interacts with PARD6B and CRB3. Interacts strongly with GTP-bound RRAGA but not with inactive GDP-bound. Interacts with p62/SQSTM1.

It localises to the cytoplasm. The protein resides in the lysosome. It is found in the nucleus. Molecular scaffold protein for various multimeric protein complexes. Acts as a module in the assembly of a multicomponent scaffold for the ERK pathway, linking ERK responses to specific agonists. At low concentrations it enhances ERK activation, whereas high concentrations lead to the inhibition of ERK activation. Also involved in response to hypoxia by acting as a negative regulator of HIF1A/HIF-1-alpha via its interaction with EGLN3/PHD3. May promote degradation of HIF1A. May act by recruiting signaling complexes to a specific upstream activator. May also be involved in pre-mRNA splicing. Participates in tight junction development by regulating apico-basal polarity, a key step in tissue development and organization. Mechanistically, regulates the translocation of PAR6-aPKC from the cytoplasm to the apical surface by acting as an adapter between PARD6B AND CRB3. Also acts as a negative regulator of mTORC1 under nutrient-rich conditions by binding to the active Rag GTPases to inhibit mTORC1 localization to the lysosome and phosphorylation of downstream targets. This facilitates constitutive basal autophagy during nutrient availability. The chain is WD repeat domain-containing protein 83 (WDR83) from Homo sapiens (Human).